A 156-amino-acid chain; its full sequence is 6,7-dimethyl-8-ribityllumazine synthase (156 aa).

5-amino-6-(D-ribitylamino)uracil contacts are provided by residues phenylalanine 24, serine 56–glutamate 58, and alanine 80–valine 82. Glutamate 85–threonine 86 contributes to the (2S)-2-hydroxy-3-oxobutyl phosphate binding site. Histidine 88 (proton donor) is an active-site residue. Residue phenylalanine 113 coordinates 5-amino-6-(D-ribitylamino)uracil. (2S)-2-hydroxy-3-oxobutyl phosphate is bound at residue arginine 127.

It belongs to the DMRL synthase family.

It catalyses the reaction (2S)-2-hydroxy-3-oxobutyl phosphate + 5-amino-6-(D-ribitylamino)uracil = 6,7-dimethyl-8-(1-D-ribityl)lumazine + phosphate + 2 H2O + H(+). The protein operates within cofactor biosynthesis; riboflavin biosynthesis; riboflavin from 2-hydroxy-3-oxobutyl phosphate and 5-amino-6-(D-ribitylamino)uracil: step 1/2. Functionally, catalyzes the formation of 6,7-dimethyl-8-ribityllumazine by condensation of 5-amino-6-(D-ribitylamino)uracil with 3,4-dihydroxy-2-butanone 4-phosphate. This is the penultimate step in the biosynthesis of riboflavin. The sequence is that of 6,7-dimethyl-8-ribityllumazine synthase from Thermococcus kodakarensis (strain ATCC BAA-918 / JCM 12380 / KOD1) (Pyrococcus kodakaraensis (strain KOD1)).